Reading from the N-terminus, the 165-residue chain is MSLPEKAFPVSWDQFHRDARALAWRLADNGQEWRAMVCITRGGLVPAAIVSRELNIRMIETVCIASYHDYDTQGQMKVLKSISPEIAKDGGEGVLIVDDLTDTGKTAAEVRAMLPRAHFAAVYAKPKGRPLVDTFVTEVSQDTWIYFPWDLGFTYQEPIAKGTRG.

5-phospho-alpha-D-ribose 1-diphosphate contacts are provided by residues 41–42 (RG) and 98–106 (DDLTDTGKT). D99 serves as a coordination point for Mg(2+). Guanine contacts are provided by D102 and I145. Residues D102 and I145 each coordinate xanthine. GMP contacts are provided by residues 102–106 (DTGKT) and 144–145 (WI).

It belongs to the purine/pyrimidine phosphoribosyltransferase family. XGPT subfamily. As to quaternary structure, homotetramer. Mg(2+) is required as a cofactor.

The protein resides in the cell inner membrane. The catalysed reaction is GMP + diphosphate = guanine + 5-phospho-alpha-D-ribose 1-diphosphate. It carries out the reaction XMP + diphosphate = xanthine + 5-phospho-alpha-D-ribose 1-diphosphate. It catalyses the reaction IMP + diphosphate = hypoxanthine + 5-phospho-alpha-D-ribose 1-diphosphate. It participates in purine metabolism; GMP biosynthesis via salvage pathway; GMP from guanine: step 1/1. Its pathway is purine metabolism; XMP biosynthesis via salvage pathway; XMP from xanthine: step 1/1. Purine salvage pathway enzyme that catalyzes the transfer of the ribosyl-5-phosphate group from 5-phospho-alpha-D-ribose 1-diphosphate (PRPP) to the N9 position of the 6-oxopurines guanine and xanthine to form the corresponding ribonucleotides GMP (guanosine 5'-monophosphate) and XMP (xanthosine 5'-monophosphate), with the release of PPi. To a lesser extent, also acts on hypoxanthine. This Rhizobium meliloti (strain 1021) (Ensifer meliloti) protein is Xanthine-guanine phosphoribosyltransferase.